A 486-amino-acid polypeptide reads, in one-letter code: Transcriptional adapter 2-beta (486 aa).

A ZZ-type zinc finger spans residues 4–59 (LGKKYCVNCLADVTNLRIRCAECQDIELCPECFSAGAEIGNHRRWHGYQQVDGGRF). The Zn(2+) site is built by Cys9, Cys12, Cys23, Cys26, Cys32, Cys35, His45, and His49. Residues 65–118 (EAEGGWTSREEQSLLDAIEQYGFGNWEDMAAHVGASRTPQEVMDHYVSMYIHGN) form the SANT domain. Disordered regions lie at residues 237-291 (KKDK…EKGQ) and 343-377 (EYEA…TAGL). Gly residues-rich tracts occupy residues 247–262 (GTVG…GSGS) and 367–377 (SSGGGGGTAGL).

Its subcellular location is the nucleus. Its function is as follows. Transcriptional coactivator. This chain is Transcriptional adapter 2-beta (tada2b), found in Danio rerio (Zebrafish).